A 269-amino-acid chain; its full sequence is Protein RKD1 (269 aa).

The 90-residue stretch at threonine 106–aspartate 195 folds into the RWP-RK domain. The stretch at leucine 175–aspartate 216 forms a coiled coil. Positions cysteine 230–arginine 269 are disordered. Low complexity predominate over residues serine 249 to arginine 269.

The protein resides in the nucleus. Functionally, putative transcription factor. In Arabidopsis thaliana (Mouse-ear cress), this protein is Protein RKD1 (RKD1).